Reading from the N-terminus, the 20-residue chain is Large ribosomal subunit protein bL31 (20 aa).

Zn(2+)-binding residues include Xaa-16 and Xaa-18.

Belongs to the bacterial ribosomal protein bL31 family. Type A subfamily. As to quaternary structure, part of the 50S ribosomal subunit. Zn(2+) is required as a cofactor.

In terms of biological role, binds the 23S rRNA. This is Large ribosomal subunit protein bL31 (rpmE) from Ectopseudomonas mendocina (Pseudomonas mendocina).